The sequence spans 1172 residues: Short transient receptor potential channel 2 (1172 aa).

Residues 1 to 10 show a composition bias toward basic and acidic residues; sequence MLMSRTDSKS. Disordered regions lie at residues 1–22, 69–98, 140–227, and 249–271; these read MLMSRTDSKSGKNRSGVRMFKD, VVDPSAPGSSGLNQNSTDVLESDPRPWLTN, SAAR…GGVQ, and ATCGESPPPQPASPASLSSSESV. Residues 1–659 are Cytoplasmic-facing; it reads MLMSRTDSKS…PKSQLGRLLK (659 aa). Residues 75-87 are compositionally biased toward polar residues; it reads PGSSGLNQNSTDV. Basic and acidic residues predominate over residues 166–177; that stretch reads ESAEPRAEEPNR. Polar residues predominate over residues 195–204; sequence SLSNSSSQPN. A compositionally biased stretch (basic residues) spans 206–218; that stretch reads RTGRTRQRQHRPQ. Residues 261–270 are compositionally biased toward low complexity; the sequence is SPASLSSSES. ANK repeat units lie at residues 301 to 330, 377 to 406, and 430 to 459; these read KFPPTLLRAIQEGQLGLVQQLLESSSDASG, QIHEALLVAVDTNQPAVVRRLLARLEREKG, and PGVTPLTLACQKDLYEIAQLLMDQGHTIAR. A helical membrane pass occupies residues 660–680; sequence IPVLKFLLHSASYLWFLIFLL. Topologically, residues 681 to 702 are extracellular; it reads GESLVMETQLSTFKGRSQSVWE. Residues 703 to 723 traverse the membrane as a helical segment; it reads TSLHMIWVTGFLWFECKEVWI. The Cytoplasmic portion of the chain corresponds to 724–738; that stretch reads EGLRSYLLDWWNFLD. The helical transmembrane segment at 739 to 759 threads the bilayer; the sequence is VVILSLYLASFALRLLLAGLA. Residues 760-789 are Extracellular-facing; it reads YMHCRDASDSTTCRYFTTAERSEWRTEDPQ. The helical transmembrane segment at 790–810 threads the bilayer; the sequence is FLAEVLFAVTSMLSFTRLAYI. Topologically, residues 811-833 are cytoplasmic; the sequence is LPAHESLGTLQISIGKMIDDMIR. The chain crosses the membrane as a helical span at residues 834 to 854; that stretch reads FMFILMIILTAFLCGLNNIYV. Over 855–899 the chain is Extracellular; sequence PYQESEKLGNFNETFQFLFWTMFGMEEHTVVDMPQFLVPEFVGRA. The chain crosses the membrane as a helical span at residues 900 to 920; that stretch reads MYGIFTIVMVIVLLNMLIAMI. Residues 921–1172 lie on the Cytoplasmic side of the membrane; that stretch reads TNSFQKIEDD…EGDLETKGES (252 aa). A disordered region spans residues 1118-1172; it reads VSLGDGLDGTGEAGAPAPGEPGSSSSAHVLVHREQEAEGSGDLLLEGDLETKGES. Positions 1130 to 1144 are enriched in low complexity; it reads AGAPAPGEPGSSSSA.

This sequence belongs to the transient receptor (TC 1.A.4) family. STrpC subfamily. TRPC2 sub-subfamily. In terms of tissue distribution, isoform 3 is ubiquitously expressed at low levels. Isoform 4 is expressed exclusively in vomeronasal organ.

The protein localises to the membrane. In terms of biological role, thought to form a receptor-activated non-selective calcium permeant cation channel. Probably is operated by a phosphatidylinositol second messenger system activated by receptor tyrosine kinases or G-protein coupled receptors. May also be activated by intracellular calcium store depletion. Plays a role in mediating responsivity to pheromones that elicit aggressive and mating behaviors. Required for response to the Esp1 pheromone which enhances female sexual receptive behavior and to the Esp22 pheromone which inhibits adult male mating behavior. This is Short transient receptor potential channel 2 (Trpc2) from Mus musculus (Mouse).